A 292-amino-acid chain; its full sequence is Probable alpha-L-glutamate ligase (292 aa).

In terms of domain architecture, ATP-grasp spans 104–287 (HQLLAAKGID…VATRIIEHVE (184 aa)). ATP contacts are provided by residues Lys141, 178-179 (EF), Asp187, and 211-213 (RSN). Asp248, Glu260, and Asn262 together coordinate Mg(2+). 3 residues coordinate Mn(2+): Asp248, Glu260, and Asn262.

This sequence belongs to the RimK family. Requires Mg(2+) as cofactor. The cofactor is Mn(2+).

In Stenotrophomonas maltophilia (strain R551-3), this protein is Probable alpha-L-glutamate ligase.